Consider the following 252-residue polypeptide: Uracil-DNA glycosylase (252 aa).

D87 functions as the Proton acceptor in the catalytic mechanism.

This sequence belongs to the uracil-DNA glycosylase (UDG) superfamily. UNG family.

The protein localises to the host nucleus. It catalyses the reaction Hydrolyzes single-stranded DNA or mismatched double-stranded DNA and polynucleotides, releasing free uracil.. Its function is as follows. Excises uracil residues from the DNA which can arise as a result of misincorporation of dUMP residues by DNA polymerase or deamination of cytosines. Therefore may reduce deleterious uracil incorporation into the viral genome, particularly in terminally differentiated cells which lack DNA repair enzymes. The chain is Uracil-DNA glycosylase (46) from Alcelaphine herpesvirus 1 (strain C500) (AlHV-1).